We begin with the raw amino-acid sequence, 351 residues long: Phosphoribosylformylglycinamidine cyclo-ligase (351 aa).

The protein belongs to the AIR synthase family.

The protein localises to the cytoplasm. It carries out the reaction 2-formamido-N(1)-(5-O-phospho-beta-D-ribosyl)acetamidine + ATP = 5-amino-1-(5-phospho-beta-D-ribosyl)imidazole + ADP + phosphate + H(+). Its pathway is purine metabolism; IMP biosynthesis via de novo pathway; 5-amino-1-(5-phospho-D-ribosyl)imidazole from N(2)-formyl-N(1)-(5-phospho-D-ribosyl)glycinamide: step 2/2. The polypeptide is Phosphoribosylformylglycinamidine cyclo-ligase (Idiomarina loihiensis (strain ATCC BAA-735 / DSM 15497 / L2-TR)).